A 150-amino-acid chain; its full sequence is Small ribosomal subunit protein uS11z (150 aa).

S19 carries the phosphoserine modification.

Belongs to the universal ribosomal protein uS11 family. In terms of assembly, interacts with AAK6.

The protein localises to the cytoplasm. The chain is Small ribosomal subunit protein uS11z (RPS14A) from Arabidopsis thaliana (Mouse-ear cress).